The following is a 250-amino-acid chain: Ribosomal RNA small subunit methyltransferase J (250 aa).

S-adenosyl-L-methionine is bound by residues 101 to 102 (RD), 117 to 118 (ER), 153 to 154 (SS), and D171.

It belongs to the methyltransferase superfamily. RsmJ family.

It localises to the cytoplasm. The enzyme catalyses guanosine(1516) in 16S rRNA + S-adenosyl-L-methionine = N(2)-methylguanosine(1516) in 16S rRNA + S-adenosyl-L-homocysteine + H(+). In terms of biological role, specifically methylates the guanosine in position 1516 of 16S rRNA. In Shigella boydii serotype 18 (strain CDC 3083-94 / BS512), this protein is Ribosomal RNA small subunit methyltransferase J.